We begin with the raw amino-acid sequence, 169 residues long: Sorting nexin-24 (169 aa).

Position 1 is an N-acetylmethionine (Met1). Positions 1 to 125 (MEVYIPSFRH…SFDETESEES (125 aa)) constitute a PX domain. The a 1,2-diacyl-sn-glycero-3-phospho-(1D-myo-inositol-3-phosphate) site is built by Arg38, Ser40, Lys61, and Arg74. 2 positions are modified to phosphoserine: Ser113 and Ser116.

The protein belongs to the sorting nexin family.

Its subcellular location is the cytoplasmic vesicle membrane. May be involved in several stages of intracellular trafficking. The sequence is that of Sorting nexin-24 (Snx24) from Rattus norvegicus (Rat).